Here is a 368-residue protein sequence, read N- to C-terminus: Hydrophobic dipeptide epimerase (368 aa).

Substrate-binding positions include T143 and 168–170 (KIK). D197, E225, and D253 together coordinate Mg(2+). Substrate contacts are provided by residues K277 and 329 to 331 (DMD).

This sequence belongs to the mandelate racemase/muconate lactonizing enzyme family. The cofactor is Mg(2+).

Its function is as follows. Catalyzes the epimerization of various hydrophobic dipeptides, such as L-Ala-L-Phe. Has epimerase activity with L-Ala-L-Thr, L-Ala-L-Met, L-Ala-L-Tyr, as well as L-Phe-L-Met, L-Phe-L-Ser and L-Phe-L-Thr (in vitro). The sequence is that of Hydrophobic dipeptide epimerase from Citrifermentans bemidjiense (strain ATCC BAA-1014 / DSM 16622 / JCM 12645 / Bem) (Geobacter bemidjiensis).